The sequence spans 65 residues: Large ribosomal subunit protein bL35 (65 aa).

Belongs to the bacterial ribosomal protein bL35 family.

The chain is Large ribosomal subunit protein bL35 from Chlorobium phaeovibrioides (strain DSM 265 / 1930) (Prosthecochloris vibrioformis (strain DSM 265)).